Here is a 307-residue protein sequence, read N- to C-terminus: Melanoma-associated antigen F1 (307 aa).

Residues 1 to 55 (MLQTPESRGLPVPQAEGEKDGGHDGETRAPTASQERPKEELGAGREEGAAEPALT) are disordered. Basic and acidic residues-rich tracts occupy residues 16 to 27 (EGEKDGGHDGET) and 35 to 48 (ERPK…REEG). The MAGE domain occupies 76-277 (LNRTVAELVQ…HWPVQYREAL (202 aa)).

Interacts (via MAGE domain) with RING-type zinc finger-containing E3 ubiquitin-protein ligases LNX1, TRIM27 and NSMCE1; the interaction is direct. In terms of tissue distribution, ubiquitous.

Enhances ubiquitin ligase activity of RING-type zinc finger-containing E3 ubiquitin ligases. Proposed to act through recruitment and/or stabilization of the E2 ubiquitin-conjugating enzyme at the E3:substrate complex. MAGEF1-NSMCE1 ubiquitin ligase complex promotes proteasomal degradation of MMS19, a key component of the cytosolic iron-sulfur protein assembly (CIA) machinery. Down-regulation of MMS19 impairs the activity of several DNA repair and metabolism enzymes such as ERCC2/XPD, FANCJ, RTEL1 and POLD1 that require iron-sulfur clusters as cofactors. May negatively regulate genome integrity by inhibiting homologous recombination-mediated double-strand break DNA repair. This chain is Melanoma-associated antigen F1, found in Homo sapiens (Human).